We begin with the raw amino-acid sequence, 152 residues long: MFSGASAINLDTKGRIAIPKRYREPLHACHNSQLVITVDIQSSCLLLYPIQEWEKVAAKLALLSDTQPTERAIKRMLLGYAHECELDGNGRMLLPTPLRQYANLDKRAMLVGQLNKFELWDEAAWQQQIEQSRLAILNEDLAANERLADFSL.

2 SpoVT-AbrB domains span residues 5-52 and 81-124; these read ASAI…PIQE and AHEC…DEAA.

Belongs to the MraZ family. As to quaternary structure, forms oligomers.

It localises to the cytoplasm. The protein resides in the nucleoid. The protein is Transcriptional regulator MraZ of Shewanella halifaxensis (strain HAW-EB4).